Reading from the N-terminus, the 305-residue chain is Ribonuclease BN (305 aa).

Residues histidine 64, histidine 66, aspartate 68, histidine 69, histidine 141, aspartate 212, and histidine 270 each coordinate Zn(2+). Residue aspartate 68 is the Proton acceptor of the active site.

The protein belongs to the RNase Z family. RNase BN subfamily. As to quaternary structure, homodimer. Requires Zn(2+) as cofactor.

In terms of biological role, zinc phosphodiesterase, which has both exoribonuclease and endoribonuclease activities. In Salmonella gallinarum (strain 287/91 / NCTC 13346), this protein is Ribonuclease BN.